The following is a 207-amino-acid chain: N-(5'-phosphoribosyl)anthranilate isomerase (207 aa).

The protein belongs to the TrpF family.

The catalysed reaction is N-(5-phospho-beta-D-ribosyl)anthranilate = 1-(2-carboxyphenylamino)-1-deoxy-D-ribulose 5-phosphate. It functions in the pathway amino-acid biosynthesis; L-tryptophan biosynthesis; L-tryptophan from chorismate: step 3/5. In Legionella pneumophila (strain Corby), this protein is N-(5'-phosphoribosyl)anthranilate isomerase.